The chain runs to 295 residues: Myosin light chain kinase A (295 aa).

In terms of domain architecture, Protein kinase spans 8-265 (YEFKEELGRG…ATNALNHPWL (258 aa)). Residues 14-22 (LGRGAFSIV) and K37 each bind ATP. Residue D130 is the Proton acceptor of the active site. Phosphothreonine occurs at positions 166 and 289. The autoinhibitory domain stretch occupies residues 264-295 (WLKSNNSNNTIDTVKMKEYIVERQKTQTKLVN).

The protein belongs to the protein kinase superfamily. CAMK Ser/Thr protein kinase family. CaMK subfamily. Autophosphorylated. Transiently phosphorylated on Thr-166 and Thr-289. This phosphorylation is gbpC-dependent.

The catalysed reaction is L-seryl-[myosin light chain] + ATP = O-phospho-L-seryl-[myosin light chain] + ADP + H(+). It carries out the reaction L-threonyl-[myosin light chain] + ATP = O-phospho-L-threonyl-[myosin light chain] + ADP + H(+). Possesses an autoinhibitory domain. Autophosphorylation appears to increase the enzymatic activity. Activation is gbdC-dependent. Does not have a calmodulin-binding domain. Functionally, phosphorylates a specific serine in the N-terminus of a myosin light chain. Phosphorylates regulatory myosin light chain (mlcR) during chemotaxis. mlcR phosphorylation increases the motility and actin-activated ATPase activity of myosin, contributing to chemotaxis. This chain is Myosin light chain kinase A (mlkA), found in Dictyostelium discoideum (Social amoeba).